Reading from the N-terminus, the 251-residue chain is MKLIEAANYEEMSQKAADIIIAQVKEKPDSVLGLATGSTMLGTYKQLVEDHRQNGTSYRNVRTVNLDEYIGLSPDHPNSYRYYMNQHLFSHIDIPLSQTYIPNGASDDVEAECRRYEQLIESLGGIDLQLLGIGRNGHIGFNEPGTSFSAPTHVVELAPSTRQANARFFPSFNDVPRQAITMGIATIMKSRHILLLASGTAKAPIMAKLFEETVTTDVPASVLHTHPNVTVIADQDALSLVPDEKRKVYAK.

Aspartate 67 (proton acceptor; for enolization step) is an active-site residue. Catalysis depends on asparagine 136, which acts as the For ring-opening step. Residue histidine 138 is the Proton acceptor; for ring-opening step of the active site. The For ring-opening step role is filled by glutamate 143.

The protein belongs to the glucosamine/galactosamine-6-phosphate isomerase family. NagB subfamily.

The catalysed reaction is alpha-D-glucosamine 6-phosphate + H2O = beta-D-fructose 6-phosphate + NH4(+). It functions in the pathway amino-sugar metabolism; N-acetylneuraminate degradation; D-fructose 6-phosphate from N-acetylneuraminate: step 5/5. Functionally, catalyzes the reversible isomerization-deamination of glucosamine 6-phosphate (GlcN6P) to form fructose 6-phosphate (Fru6P) and ammonium ion. This Geobacillus sp. (strain WCH70) protein is Glucosamine-6-phosphate deaminase.